A 70-amino-acid chain; its full sequence is Large ribosomal subunit protein bL31 (70 aa).

The protein belongs to the bacterial ribosomal protein bL31 family. Type A subfamily. In terms of assembly, part of the 50S ribosomal subunit.

In terms of biological role, binds the 23S rRNA. In Chlorobium chlorochromatii (strain CaD3), this protein is Large ribosomal subunit protein bL31.